Here is a 339-residue protein sequence, read N- to C-terminus: MRIIGIETSCDETGIAIYDDEKGLLSHKLYSQVKLHADYGGVVPELASRDHVKKTIPLIKAAMAEANVTPQDLDGVAFTAGPGLVGALLVGATIGRSLAYAWDVPAVPVHHMEGHLLAPMLEENPPPFPFVALLVSGGHTMLVEVKNIGEYRILGESIDDAAGEAFDKTAKLMGLDYPGGPLLAKLAEKGTPGRFKFPRPMTDRPGLDMSFSGLKTFTANTIAANGDDEQTRADIAYAFQEAVCDTLVIKCKRALEETGLKRVVIAGGVSANKQLRADLEKLAKKIGGEVYYPRTEFCTDNGAMIAYAGMQRLKNGDVCELGLQARPRWPIDQLTSIQK.

Residues histidine 111 and histidine 115 each contribute to the Fe cation site. Substrate-binding positions include leucine 134–glycine 138, aspartate 167, glycine 180, and asparagine 272. Residue aspartate 300 participates in Fe cation binding.

It belongs to the KAE1 / TsaD family. Fe(2+) serves as cofactor.

Its subcellular location is the cytoplasm. The enzyme catalyses L-threonylcarbamoyladenylate + adenosine(37) in tRNA = N(6)-L-threonylcarbamoyladenosine(37) in tRNA + AMP + H(+). Its function is as follows. Required for the formation of a threonylcarbamoyl group on adenosine at position 37 (t(6)A37) in tRNAs that read codons beginning with adenine. Is involved in the transfer of the threonylcarbamoyl moiety of threonylcarbamoyl-AMP (TC-AMP) to the N6 group of A37, together with TsaE and TsaB. TsaD likely plays a direct catalytic role in this reaction. The protein is tRNA N6-adenosine threonylcarbamoyltransferase of Vibrio cholerae serotype O1 (strain ATCC 39541 / Classical Ogawa 395 / O395).